The chain runs to 590 residues: Probable lysosomal cobalamin transporter (590 aa).

Transmembrane regions (helical) follow at residues 8 to 28, 46 to 66, 94 to 114, 145 to 165, 190 to 210, 314 to 334, 348 to 367, 376 to 396, 421 to 441, and 508 to 528; these read LIWV…SIFI, IFTL…VALV, AVAY…VVPF, TVAF…VPIG, ALTF…VLYT, LLSG…MLLT, CGYI…VFVH, YILF…GIAT, ITTV…SMVV, and FFGI…LLVF. The interval 567 to 590 is disordered; the sequence is WEDITGRASRSPQVSGSAGRGTRE.

It belongs to the LIMR family. LMBRD1 subfamily.

It is found in the lysosome membrane. Functionally, probable lysosomal cobalamin transporter. Required to export cobalamin from lysosomes allowing its conversion to cofactors. This chain is Probable lysosomal cobalamin transporter, found in Ajellomyces capsulatus (strain NAm1 / WU24) (Darling's disease fungus).